The primary structure comprises 192 residues: MGVPDCLALPLLVTFLLLSLGLPVLGAPPRLICDSRVLERYILEAKEAENITMGCAEGPRFNENFTVPDTKVNFYAWKTMGVEEQAVEVWQGLSLLFEAILQAQAVLANSSQPSEMLQLHVDKAISGLRSLTSLLRALGAQKEAISPPDTTQVIPLRRFTVDTFCKLFRIYSNFLRGKLKLYTGEACRRGDR.

The first 26 residues, methionine 1–glycine 26, serve as a signal peptide directing secretion. An intrachain disulfide couples cysteine 33 to cysteine 187. Residues asparagine 50, asparagine 64, and asparagine 109 are each glycosylated (N-linked (GlcNAc...) asparagine).

It belongs to the EPO/TPO family.

The protein localises to the secreted. Functionally, hormone involved in the regulation of erythrocyte proliferation and differentiation and the maintenance of a physiological level of circulating erythrocyte mass. Binds to EPOR leading to EPOR dimerization and JAK2 activation thereby activating specific downstream effectors, including STAT1 and STAT3. The chain is Erythropoietin (EPO) from Spalax golani (Golan Heights blind mole rat).